The following is a 352-amino-acid chain: Protein-glutamate methylesterase/protein-glutamine glutaminase (352 aa).

Residues 5-122 (RAIVIDDSAF…SLDIRNVEDE (118 aa)) form the Response regulatory domain. The residue at position 56 (aspartate 56) is a 4-aspartylphosphate. Positions 163–352 (RSIVSIGTST…IPSLIVKQLT (190 aa)) constitute a CheB-type methylesterase domain. Catalysis depends on residues serine 171, histidine 198, and aspartate 294.

This sequence belongs to the CheB family. Phosphorylated by CheA. Phosphorylation of the N-terminal regulatory domain activates the methylesterase activity.

It localises to the cytoplasm. It carries out the reaction [protein]-L-glutamate 5-O-methyl ester + H2O = L-glutamyl-[protein] + methanol + H(+). The catalysed reaction is L-glutaminyl-[protein] + H2O = L-glutamyl-[protein] + NH4(+). Its function is as follows. Involved in chemotaxis. Part of a chemotaxis signal transduction system that modulates chemotaxis in response to various stimuli. Catalyzes the demethylation of specific methylglutamate residues introduced into the chemoreceptors (methyl-accepting chemotaxis proteins or MCP) by CheR. Also mediates the irreversible deamidation of specific glutamine residues to glutamic acid. This is Protein-glutamate methylesterase/protein-glutamine glutaminase from Oceanobacillus iheyensis (strain DSM 14371 / CIP 107618 / JCM 11309 / KCTC 3954 / HTE831).